Reading from the N-terminus, the 295-residue chain is Putative ribose uptake protein RbsU (295 aa).

A run of 10 helical transmembrane segments spans residues 5 to 24, 34 to 56, 63 to 80, 95 to 114, 121 to 139, 154 to 171, 183 to 205, 220 to 237, 244 to 266, and 276 to 293; these read ALLI…TIAS, ILGT…GLAF, FFSI…IITF, TTAF…LGNW, LLGA…MTVW, AVLL…YSAA, FLPQ…TIKG, IFSG…LISA, LATG…IWFL, and TVTI…TITV.

The protein belongs to the GRP transporter (TC 2.A.7.5) family.

It is found in the cell membrane. Could be involved in the uptake of ribose. This Enterococcus faecalis (strain ATCC 700802 / V583) protein is Putative ribose uptake protein RbsU (rbsU).